Reading from the N-terminus, the 261-residue chain is Ribonuclease HII (261 aa).

The RNase H type-2 domain occupies 72 to 260; the sequence is AVICGIDEVG…IKSIVLEKLD (189 aa). Positions 78, 79, and 170 each coordinate a divalent metal cation.

This sequence belongs to the RNase HII family. Requires Mn(2+) as cofactor. Mg(2+) is required as a cofactor.

It is found in the cytoplasm. It catalyses the reaction Endonucleolytic cleavage to 5'-phosphomonoester.. Endonuclease that specifically degrades the RNA of RNA-DNA hybrids. The chain is Ribonuclease HII from Staphylococcus carnosus (strain TM300).